A 270-amino-acid polypeptide reads, in one-letter code: Pantoate kinase (270 aa).

The protein belongs to the GHMP kinase family. PoK subfamily.

It carries out the reaction (R)-pantoate + ATP = (R)-4-phosphopantoate + ADP + H(+). The protein operates within cofactor biosynthesis; coenzyme A biosynthesis. Functionally, phosphorylates (R)-pantoate to form (R)-4-phosphopantoate in the CoA biosynthesis pathway. The protein is Pantoate kinase of Methanocaldococcus jannaschii (strain ATCC 43067 / DSM 2661 / JAL-1 / JCM 10045 / NBRC 100440) (Methanococcus jannaschii).